Here is a 94-residue protein sequence, read N- to C-terminus: Co-chaperonin GroES (94 aa).

The protein belongs to the GroES chaperonin family. As to quaternary structure, heptamer of 7 subunits arranged in a ring. Interacts with the chaperonin GroEL.

It localises to the cytoplasm. In terms of biological role, together with the chaperonin GroEL, plays an essential role in assisting protein folding. The GroEL-GroES system forms a nano-cage that allows encapsulation of the non-native substrate proteins and provides a physical environment optimized to promote and accelerate protein folding. GroES binds to the apical surface of the GroEL ring, thereby capping the opening of the GroEL channel. The polypeptide is Co-chaperonin GroES (Enterococcus faecalis (strain ATCC 700802 / V583)).